The following is a 379-amino-acid chain: Leukocyte elastase inhibitor (379 aa).

Position 1 is an N-acetylmethionine (Met-1). N6-acetyllysine occurs at positions 137 and 177. A Phosphoserine modification is found at Ser-300. The interval 351 to 379 (NFTADHPFLFFIRHNSSGSILFLGRFSSP) is CARD-binding motif (CBM).

It belongs to the serpin family. Ov-serpin subfamily. In terms of assembly, monomer. Interacts (via C-terminus) with CASP1; CASP4 (via CARD domain) and CASP5; these interactions regulate the activity of inflammatory caspases. Interacts with PRTN3. Interacts with GZMH. As to expression, in human bone marrow, present in all CD45+ populations. Expression levels are highest in the neutrophil lineage, intermediate in monocytic, and lowest in lymphocytic lineage. Within the neutrophil lineage, expression is highest in promyelocytes.

The protein localises to the secreted. Its subcellular location is the cytoplasm. It is found in the cytolytic granule. It localises to the early endosome. Its function is as follows. Neutrophil serine protease inhibitor that plays an essential role in the regulation of the innate immune response, inflammation and cellular homeostasis. Acts primarily to protect the cell from proteases released in the cytoplasm during stress or infection. These proteases are important in killing microbes but when released from granules, these potent enzymes also destroy host proteins and contribute to mortality. Regulates the activity of the neutrophil proteases elastase, cathepsin G, proteinase-3, chymase, chymotrypsin, and kallikrein-3. Also acts as a potent intracellular inhibitor of GZMH by directly blocking its proteolytic activity. During inflammation, limits the activity of inflammatory caspases CASP1, CASP4 and CASP5 by suppressing their caspase-recruitment domain (CARD) oligomerization and enzymatic activation. When secreted, promotes the proliferation of beta-cells via its protease inhibitory function. The protein is Leukocyte elastase inhibitor (SERPINB1) of Homo sapiens (Human).